The following is a 351-amino-acid chain: Outer membrane porin protein 32 (351 aa).

An N-terminal signal peptide occupies residues 1–19 (MKKSLIALAVLAASGAAMA). At Gln20 the chain carries Pyrrolidone carboxylic acid.

This sequence to bacterial outer membrane proteins and porins. Homotrimer.

It localises to the cell outer membrane. Its function is as follows. Forms anion selective channels. The polypeptide is Outer membrane porin protein 32 (omp32) (Delftia acidovorans (Pseudomonas acidovorans)).